The chain runs to 301 residues: Rhodopsin (301 aa).

The Extracellular portion of the chain corresponds to 1–18 (LHMIHLHWYQYPPMNPIM). The helical transmembrane segment at 19-43 (YPLLLVFMLITGILCLAGNFVTIWV) threads the bilayer. The Cytoplasmic segment spans residues 44 to 55 (FMNTKSLRTPAN). A helical membrane pass occupies residues 56–78 (LLVVNLAMSDFLMMFTMFPPMMI). Over 79-92 (TCYYHTWTLGATFC) the chain is Extracellular. Cysteine 92 and cysteine 169 are joined by a disulfide. The helical transmembrane segment at 93–115 (QVYAFLGNLCGCASIWTMVFITF) threads the bilayer. A 'Ionic lock' involved in activated form stabilization motif is present at residues 116 to 118 (DRY). At 116–134 (DRYNVIVKGVAGEPLSTKK) the chain is on the cytoplasmic side. Residues 135-155 (ATLWILTIWILSTTWCVAPFF) form a helical membrane-spanning segment. The Extracellular segment spans residues 156–182 (GWNRYVPEGNLTGCGTDYLSQDILSRS). A glycan (N-linked (GlcNAc...) asparagine) is linked at asparagine 165. A helical membrane pass occupies residues 183–204 (YLYIYSTWVYFLPLAITIYCYV). Residues 205–245 (VIIKAVAAHEKGMRDQAKKMGIKSLRNEEAQKTSAECRLAK) lie on the Cytoplasmic side of the membrane. Residues 246-267 (IAMTTVALWFIAWTPYLLINWV) traverse the membrane as a helical segment. Topologically, residues 268 to 278 (GMFARSYLSPV) are extracellular. The chain crosses the membrane as a helical span at residues 279–300 (YTIWGYVFAKANAVYNPIVYAI). Lysine 288 bears the N6-(retinylidene)lysine mark.

This sequence belongs to the G-protein coupled receptor 1 family. Opsin subfamily. In terms of assembly, homodimer. Interacts with GNAQ. Contains one covalently linked retinal chromophore.

Its subcellular location is the cell projection. It is found in the rhabdomere membrane. Photoreceptor required for image-forming vision at low light intensity. Can use both retinal and 3-dehydroretinal as visual pigment. Light-induced isomerization of 11-cis to all-trans retinal triggers a conformational change that activates signaling via G-proteins. Signaling via GNAQ probably mediates the activation of phospholipase C. The protein is Rhodopsin (RHO) of Orconectes australis (Southern cave crayfish).